A 369-amino-acid chain; its full sequence is DNA polymerase IV 2 (369 aa).

The 185-residue stretch at 17–201 folds into the UmuC domain; sequence VFHVDMDSFF…LPVSRIPGVG (185 aa). Mg(2+) contacts are provided by Asp-21 and Asp-119. The active site involves Glu-120.

It belongs to the DNA polymerase type-Y family. In terms of assembly, monomer. Mg(2+) serves as cofactor.

It localises to the cytoplasm. It catalyses the reaction DNA(n) + a 2'-deoxyribonucleoside 5'-triphosphate = DNA(n+1) + diphosphate. Its function is as follows. Poorly processive, error-prone DNA polymerase involved in untargeted mutagenesis. Copies undamaged DNA at stalled replication forks, which arise in vivo from mismatched or misaligned primer ends. These misaligned primers can be extended by PolIV. Exhibits no 3'-5' exonuclease (proofreading) activity. May be involved in translesional synthesis. The sequence is that of DNA polymerase IV 2 (dbh2) from Methanosarcina mazei (strain ATCC BAA-159 / DSM 3647 / Goe1 / Go1 / JCM 11833 / OCM 88) (Methanosarcina frisia).